The sequence spans 674 residues: Zyxin (674 aa).

The tract at residues P35–Q447 is disordered. The span at L86–S109 shows a compositional bias: pro residues. Positions F110–G120 are enriched in low complexity. Composition is skewed to pro residues over residues L121–L148, A162–P180, K187–S209, K222–A240, and A254–P266. Basic and acidic residues-rich tracts occupy residues A328–A341 and Q358–R387. LIM zinc-binding domains follow at residues E481–C542, C543–A600, and P601–A671.

The protein belongs to the zyxin/ajuba family. Interacts (via LIM2 domain) with hesx1/anf1.

The protein localises to the cytoplasm. It localises to the cytoskeleton. The protein resides in the cell junction. It is found in the focal adhesion. In terms of biological role, adhesion plaque protein. May be a component of a signal transduction pathway that mediates adhesion-stimulated changes in gene expression. Suppresses the transcription-repressing activity of hesx1/anf1. The polypeptide is Zyxin (Xenopus tropicalis (Western clawed frog)).